Here is a 437-residue protein sequence, read N- to C-terminus: tRNA(Ile2) 2-agmatinylcytidine synthetase TiaS (437 aa).

It belongs to the TiaS family.

It is found in the cytoplasm. It carries out the reaction cytidine(34) in tRNA(Ile2) + agmatine + ATP + H2O = 2-agmatinylcytidine(34) in tRNA(Ile2) + AMP + 2 phosphate + 2 H(+). ATP-dependent agmatine transferase that catalyzes the formation of 2-agmatinylcytidine (agm2C) at the wobble position (C34) of tRNA(Ile2), converting the codon specificity from AUG to AUA. The chain is tRNA(Ile2) 2-agmatinylcytidine synthetase TiaS from Acidilobus saccharovorans (strain DSM 16705 / JCM 18335 / VKM B-2471 / 345-15).